The following is a 305-amino-acid chain: UDP-3-O-acyl-N-acetylglucosamine deacetylase (305 aa).

Residues H79, H238, and D242 each contribute to the Zn(2+) site. The active-site Proton donor is the H265.

The protein belongs to the LpxC family. The cofactor is Zn(2+).

The enzyme catalyses a UDP-3-O-[(3R)-3-hydroxyacyl]-N-acetyl-alpha-D-glucosamine + H2O = a UDP-3-O-[(3R)-3-hydroxyacyl]-alpha-D-glucosamine + acetate. It participates in glycolipid biosynthesis; lipid IV(A) biosynthesis; lipid IV(A) from (3R)-3-hydroxytetradecanoyl-[acyl-carrier-protein] and UDP-N-acetyl-alpha-D-glucosamine: step 2/6. Functionally, catalyzes the hydrolysis of UDP-3-O-myristoyl-N-acetylglucosamine to form UDP-3-O-myristoylglucosamine and acetate, the committed step in lipid A biosynthesis. The polypeptide is UDP-3-O-acyl-N-acetylglucosamine deacetylase (Vibrio parahaemolyticus serotype O3:K6 (strain RIMD 2210633)).